The primary structure comprises 45 residues: Cytochrome b559 subunit beta (45 aa).

A helical transmembrane segment spans residues 20-36 (WLALHTLGVPTVFFLGA). Heme is bound at residue His-24.

Belongs to the PsbE/PsbF family. In terms of assembly, heterodimer of an alpha subunit and a beta subunit. PSII is composed of 1 copy each of membrane proteins PsbA, PsbB, PsbC, PsbD, PsbE, PsbF, PsbH, PsbI, PsbJ, PsbK, PsbL, PsbM, PsbT, PsbX, PsbY, PsbZ, Psb30/Ycf12, peripheral proteins PsbO, CyanoQ (PsbQ), PsbU, PsbV and a large number of cofactors. It forms dimeric complexes. Heme b is required as a cofactor.

It localises to the cellular thylakoid membrane. In terms of biological role, this b-type cytochrome is tightly associated with the reaction center of photosystem II (PSII). PSII is a light-driven water:plastoquinone oxidoreductase that uses light energy to abstract electrons from H(2)O, generating O(2) and a proton gradient subsequently used for ATP formation. It consists of a core antenna complex that captures photons, and an electron transfer chain that converts photonic excitation into a charge separation. The sequence is that of Cytochrome b559 subunit beta from Parasynechococcus marenigrum (strain WH8102).